Reading from the N-terminus, the 3390-residue chain is MNNQRKKTGKPSINMLKRVRNRVSTGSQLAKRFSRGLLNGQGPMKLVMAFIAFLRFLAIPPTAGVLARWGTFKKSGAIKVLKGFKKEISNMLSIINKRKKTSLCLMMMLPATLAFHLTSRDGEPRMIVGKNERGKSLLFKTASGINMCTLIAMDLGEMCDDTVTYKCPHITEVEPEDIDCWCNLTSTWVTYGTCNQAGEHRRDKRSVALAPHVGMGLDTRTQTWMSAEGAWRQVEKVETWALRHPGFTILALFLAHYIGTSLTQKVVIFILLMLVTPSMTMRCVGVGNRDFVEGLSGATWVDVVLEHGGCVTTMAKNKPTLDIELQKTEATQLATLRKLCIEGKITNITTDSRCPTQGEAILPEEQDQNYVCKHTYVDRGWGNGCGLFGKGSLVTCAKFQCLESIEGKVVQHENLKYTVIITVHTGDQHQVGNETQGVTAEITSQASTAEAILPEYGTLGLECSPRTGLDFNEMILLTMKNKAWMVHRQWFFDLPLPWTSGATTKTPTWNRKELLVTFKNAHAKKQEVVVLGSQEGAMHTALTGATEIQTSGGTSIFAGHLKCRLKMDKLKLKGMSYAMCLNTFVLKKEVSETQHGTILIKVEYKGEDAPCKIPFSTEDGQGKAHNGRLITANPVVTKKEEPVNIEAEPPFGESNIVIGIGDKALKINWYRKGSSIGKMFEATARGARRMAILGDTAWDFGSVGGVLNSLGKMVHQIFGSAYTALFSGVSWIMKIGIGVLLTWIGLNSKNTSMSFSCIAIGIITLYLGVVVQADMGCVINWKGKELKCGSGIFVTNEVHTWTEQYKFQADSPKRVATAIAGAWENGVCGIRSTTRMENLLWKQIANELNYILWENDIKLTVVVGDITGVLEQGKRTLTPQPMELKYSWKTWGLAKIVTAETQNSSFIIDGPSTPECPSASRAWNVWEVEDYGFGVFTTNIWLKLREVYTQLCDHRLMSAAVKDERAVHADMGYWIESQKNGSWKLEKASLIEVKTCTWPKSHTLWSNGVLESDMIIPKSLAGPISQHNHRPGYHTQTAGPWHLGKLELDFNYCEGTTVVISENCGTRGPSLRTTTVSGKLIHEWCCRSCTLPPLRYMGEDGCWYGMEIRPINEKEENMVKSLASAGSGKVDNFTMGVLCLAILFEEVMRGKFGKKHMIAGVLFTFVLLLSGQITWRGMAHTLIMIGSNASDRMGMGVTYLALIATFKIQPFLALGFFLRKLTSRENLLLGVGLAMAATLRLPEDIEQMANGIALGLMALKLITQFETYQLWTALVSLTCSNTIFTLTVAWRTATLILAGISLLPVCQSSSMRKTDWLPMTVAAMGVPPLPLFIFSLKDTLKRRSWPLNEGVMAVGLVSILASSLLRNDVPMAGPLVAGGLLIACYVITGTSADLTVEKAADVTWEEEAEQTGVSHNLMITVDDDGTMRIKDDETENILTVLLKTALLIVSGIFPYSIPATMLVWHTWQKQTQRSGVLWDVPSPPETQKAELEEGVYRIKQQGIFGKTQVGVGVQKEGVFHTMWHVTRGAVLTHNGKRLEPNWASVKKDLISYGGGWRLSAQWQKGEEVQVIAVEPGKNPKNFQTMPGIFQTTTGEIGAIALDFKPGTSGSPIINREGKVVGLYGNGVVTKNGGYVSGIAQTNAEPDGPTPELEEEMFKKRNLTIMDLHPGSGKTRKYLPAIVREAIKRRLRTLILAPTRVVAAEMEEAMKGLPIRYQTTATKSEHTGREIVDLMCHATFTMRLLSPVRVPNYNLIIMDEAHFTDPASIAARGYISTRVGMGEAAAIFMTATPPGTADAFPQSNAPIQDEERDIPERSWNSGNEWITDFVGKTVWFVPSIKAGNVIANCLRKNGKKVIQLSRKTFDTEYQKTKLNDWDFVVTTDISEMGANFIADRVIDPRRCLKPVILTDGPERVILAGPMPVTVASAAQRRGRVGRNPQKENDQYIFMGQPLNKDEDHAHWTEAKMLLDNINTPEGIIPALFEPEREKSAAIDGEYRLKGESRKTFVELMRRGDLPVWLAHKVASEGIKYTDRKWCFDGERNNQILEENMDVEIWTKEGEKKKLRPRWLDARTYSDPLALKEFKDFAAGRKSIALDLVTEIGRVPSHLAHRTRNALDNLVMLHTSEHGGRAYRHAVEELPETMETLLLLGLMILLTGGAMLFLISGKGIGKTSIGLICVIASSGMLWMADVPLQWIASAIVLEFFMMVLLIPEPEKQRTPQDNQLAYVVIGILTLAAIVAANEMGLLETTKRDLGMSKEPGVVSPTSYLDVDLHPASAWTLYAVATTVITPMLRHTIENSTANVSLAAIANQAVVLMGLDKGWPISKMDLGVPLLALGCYSQVNPLTLIAAVLLLVTHYAIIGPGLQAKATREAQKRTAAGIMKNPTVDGIMTIDLDPVIYDSKFEKQLGQVMLLVLCAVQLLLMRTSWALCEVLTLATGPITTLWEGSPGKFWNTTIAVSMANIFRGSYLAGAGLALSIMKSVGTGKRGTGSQGETLGEKWKKKLNQLSRKEFDLYKKSGITEVDRTEAKEGLKRGEITHHAVSRGSAKLQWFVERNMVIPEGRVIDLGCGRGGWSYYCAGLKKVTEVRGYTKGGPGHEEPVPMSTYGWNIVKLMSGKDVFYLPPEKCDTLLCDIGESSPSPTVEESRTIRVLKMVEPWLKNNQFCIKVLNPYMPTVIEHLERLQRKHGGMLVRNPLSRNSTHEMYWISNGTGNIVSSVNMVSRLLLNRFTMTHRRPTIEKDVDLGAGTRHVNAEPETPNMDVIGERIKRIKEEHSSTWHYDDENPYKTWAYHGSYEVKATGSASSMINGVVKLLTKPWDVVPMVTQMAMTDTTPFGQQRVFKEKVDTRTPRPMPGTRKVMEITAEWLWRTLGRNKRPRLCTREEFTKKVRTNAAMGAVFTEENQWDSARAAVEDEEFWKLVDRERELHKLGKCGSCVYNMMGKREKKLGEFGKAKGSRAIWYMWLGARYLEFEALGFLNEDHWFSRENSYSGVEGEGLHKLGYILRDISKIPGGAMYADDTAGWDTRITEDDLHNEEKITQQMDPEHRQLANAIFKLTYQNKVVKVQRPTPKGTVMDIISRKDQRGSGQVGTYGLNTFTNMEAQLIRQMEGEGVLSKADLENPHPLEKKITQWLETKGVERLKRMAISGDDCVVKPIDDRFANALLALNDMGKVRKDIPQWQPSKGWHDWQQVPFCSHHFHELIMKDGRKLVVPCRPQDELIGRARISQGAGWSLRETACLGKAYAQMWTLMYFHRRDLRLASNAICSAVPVHWVPTSRTTWSIHAHHQWMTTEDMLTVWNRVWIEDNPWMEDKTPVTTWEDVPYLGKREDQWCGSLIGLTSRATWAQNILTAIQQVRSLIGNEEFLDYMPSMKRFRKEEESEGAIW.

Positions 1 to 15 are interaction with host EXOC1; sequence MNNQRKKTGKPSINM. Over 1–100 the chain is Cytoplasmic; it reads MNNQRKKTGK…MLSIINKRKK (100 aa). Positions 37 to 72 are hydrophobic; homodimerization of capsid protein C; it reads LLNGQGPMKLVMAFIAFLRFLAIPPTAGVLARWGTF. Residues 101–114 constitute a propeptide, ER anchor for the capsid protein C, removed in mature form by serine protease NS3; that stretch reads TSLCLMMMLPATLA. A helical membrane pass occupies residues 101–118; it reads TSLCLMMMLPATLAFHLT. Residues 119-243 are Extracellular-facing; that stretch reads SRDGEPRMIV…VEKVETWALR (125 aa). Residue Asn-183 is glycosylated (N-linked (GlcNAc...) asparagine; by host). The helical transmembrane segment at 244–264 threads the bilayer; the sequence is HPGFTILALFLAHYIGTSLTQ. A topological domain (cytoplasmic) is located at residue Lys-265. A helical transmembrane segment spans residues 266–280; it reads VVIFILLMLVTPSMT. Over 281–723 the chain is Extracellular; that stretch reads MRCVGVGNRD…VHQIFGSAYT (443 aa). Cystine bridges form between Cys-283-Cys-310, Cys-340-Cys-401, Cys-354-Cys-385, and Cys-372-Cys-396. An N-linked (GlcNAc...) asparagine; by host glycan is attached at Asn-347. The interval 378-391 is fusion peptide; it reads DRGWGNGCGLFGKG. A glycan (N-linked (GlcNAc...) asparagine; by host) is linked at Asn-433. 2 disulfides stabilise this stretch: Cys-463–Cys-563 and Cys-580–Cys-611. The chain crosses the membrane as a helical span at residues 724 to 744; sequence ALFSGVSWIMKIGIGVLLTWI. The Cytoplasmic portion of the chain corresponds to 745 to 750; it reads GLNSKN. Residues 751 to 771 traverse the membrane as a helical segment; the sequence is TSMSFSCIAIGIITLYLGVVV. Topologically, residues 772 to 1193 are extracellular; that stretch reads QADMGCVINW…MIGSNASDRM (422 aa). Intrachain disulfides connect Cys-777/Cys-788, Cys-828/Cys-916, Cys-952/Cys-996, Cys-1053/Cys-1102, Cys-1064/Cys-1086, and Cys-1085/Cys-1089. N-linked (GlcNAc...) asparagine; by host glycans are attached at residues Asn-903 and Asn-980. N-linked (GlcNAc...) asparagine; by host glycans are attached at residues Asn-1132 and Asn-1188. The chain crosses the membrane as a helical span at residues 1194 to 1218; sequence GMGVTYLALIATFKIQPFLALGFFL. Residues 1219 to 1224 lie on the Cytoplasmic side of the membrane; the sequence is RKLTSR. Residues 1225 to 1243 traverse the membrane as a helical segment; that stretch reads ENLLLGVGLAMAATLRLPE. Residues 1244-1267 are Lumenal-facing; that stretch reads DIEQMANGIALGLMALKLITQFET. Residues 1268–1288 form a helical membrane-spanning segment; sequence YQLWTALVSLTCSNTIFTLTV. Residue Ala-1289 is a topological domain, cytoplasmic. A helical transmembrane segment spans residues 1290–1308; sequence WRTATLILAGISLLPVCQS. At 1309 to 1315 the chain is on the lumenal side; it reads SSMRKTD. Residues 1316 to 1336 form a helical membrane-spanning segment; it reads WLPMTVAAMGVPPLPLFIFSL. Residues 1337–1344 are Cytoplasmic-facing; it reads KDTLKRRS. A helical transmembrane segment spans residues 1345–1365; it reads WPLNEGVMAVGLVSILASSLL. The Lumenal portion of the chain corresponds to 1366–1368; sequence RND. Residues 1369–1389 form a helical membrane-spanning segment; sequence VPMAGPLVAGGLLIACYVITG. At 1390-1443 the chain is on the cytoplasmic side; that stretch reads TSADLTVEKAADVTWEEEAEQTGVSHNLMITVDDDGTMRIKDDETENILTVLLK. Residues 1396-1435 form an interacts with and activates NS3 protease region; the sequence is VEKAADVTWEEEAEQTGVSHNLMITVDDDGTMRIKDDETE. Residues 1444–1464 constitute an intramembrane region (helical); it reads TALLIVSGIFPYSIPATMLVW. The Cytoplasmic portion of the chain corresponds to 1465-2146; sequence HTWQKQTQRS…VEELPETMET (682 aa). Positions 1474–1651 constitute a Peptidase S7 domain; it reads SGVLWDVPSP…NAEPDGPTPE (178 aa). Active-site charge relay system; for serine protease NS3 activity residues include His-1524, Asp-1548, and Ser-1608. The 157-residue stretch at 1654-1810 folds into the Helicase ATP-binding domain; sequence EEMFKKRNLT…QSNAPIQDEE (157 aa). The important for RNA-binding stretch occupies residues 1658–1661; it reads KKRN. Residue 1667-1674 coordinates ATP; it reads LHPGSGKT. The DEAH box motif lies at 1758–1761; sequence DEAH. Residues 1821-1986 form the Helicase C-terminal domain; sequence GNEWITDFVG…GIIPALFEPE (166 aa). Position 1862 is an N6-acetyllysine; by host (Lys-1862). Residues 2147–2167 traverse the membrane as a helical segment; sequence LLLLGLMILLTGGAMLFLISG. Over 2168 to 2169 the chain is Lumenal; that stretch reads KG. Positions 2170–2190 form an intramembrane region, helical; sequence IGKTSIGLICVIASSGMLWMA. Asp-2191 is a topological domain (lumenal). A helical transmembrane segment spans residues 2192 to 2212; sequence VPLQWIASAIVLEFFMMVLLI. Topologically, residues 2213-2227 are cytoplasmic; that stretch reads PEPEKQRTPQDNQLA. Residues 2228 to 2248 form a helical membrane-spanning segment; that stretch reads YVVIGILTLAAIVAANEMGLL. Topologically, residues 2249-2273 are lumenal; it reads ETTKRDLGMSKEPGVVSPTSYLDVD. The helical intramembrane region spans 2274-2294; that stretch reads LHPASAWTLYAVATTVITPML. At 2295–2305 the chain is on the lumenal side; that stretch reads RHTIENSTANV. N-linked (GlcNAc...) asparagine; by host glycans are attached at residues Asn-2300 and Asn-2304. The segment at residues 2306–2326 is an intramembrane region (helical); the sequence is SLAAIANQAVVLMGLDKGWPI. The Lumenal segment spans residues 2327 to 2346; sequence SKMDLGVPLLALGCYSQVNP. A helical transmembrane segment spans residues 2347–2367; sequence LTLIAAVLLLVTHYAIIGPGL. Residues 2368–2412 lie on the Cytoplasmic side of the membrane; sequence QAKATREAQKRTAAGIMKNPTVDGIMTIDLDPVIYDSKFEKQLGQ. A helical membrane pass occupies residues 2413-2433; it reads VMLLVLCAVQLLLMRTSWALC. The Lumenal portion of the chain corresponds to 2434–2458; the sequence is EVLTLATGPITTLWEGSPGKFWNTT. The N-linked (GlcNAc...) asparagine; by host glycan is linked to Asn-2456. The helical transmembrane segment at 2459-2479 threads the bilayer; sequence IAVSMANIFRGSYLAGAGLAL. Residues 2480–3390 are Cytoplasmic-facing; sequence SIMKSVGTGK…KEEESEGAIW (911 aa). The mRNA cap 0-1 NS5-type MT domain maps to 2492–2753; the sequence is TGSQGETLGE…DVDLGAGTRH (262 aa). Ser-2546 lines the S-adenosyl-L-methionine pocket. Ser-2546 bears the Phosphoserine mark. The active-site For 2'-O-MTase activity is the Lys-2551. The SUMO-interacting motif motif lies at 2567 to 2570; sequence VIDL. S-adenosyl-L-methionine is bound by residues Gly-2576, Trp-2577, Thr-2594, Lys-2595, Asp-2621, and Val-2622. Asp-2636 (for 2'-O-MTase activity) is an active-site residue. Ile-2637 contributes to the S-adenosyl-L-methionine binding site. Active-site for 2'-O-MTase activity residues include Lys-2670 and Glu-2706. Tyr-2708 is a binding site for S-adenosyl-L-methionine. The Zn(2+) site is built by Glu-2927, His-2931, Cys-2936, and Cys-2939. The 151-residue stretch at 3018–3168 folds into the RdRp catalytic domain; it reads AMYADDTAGW…PIDDRFANAL (151 aa). Zn(2+) contacts are provided by His-3202, Cys-3218, and Cys-3337.

It in the N-terminal section; belongs to the class I-like SAM-binding methyltransferase superfamily. mRNA cap 0-1 NS5-type methyltransferase family. In terms of assembly, homodimer. Interacts (via N-terminus) with host EXOC1 (via C-terminus); this interaction results in EXOC1 degradation through the proteasome degradation pathway. As to quaternary structure, forms heterodimers with envelope protein E in the endoplasmic reticulum and Golgi. Homodimer; in the endoplasmic reticulum and Golgi. Interacts with protein prM. Interacts with non-structural protein 1. In terms of assembly, homodimer; Homohexamer when secreted. Interacts with envelope protein E. As to quaternary structure, interacts (via N-terminus) with serine protease NS3. Forms a heterodimer with serine protease NS3. May form homooligomers. In terms of assembly, forms a heterodimer with NS2B. Interacts with NS4B. Interacts with unphosphorylated RNA-directed RNA polymerase NS5; this interaction stimulates RNA-directed RNA polymerase NS5 guanylyltransferase activity. Interacts with host SHFL. As to quaternary structure, interacts with host MAVS; this interaction inhibits the synthesis of IFN-beta. Interacts with host SHFL. Interacts with host AUP1; the interaction occurs in the presence of Dengue virus NS4B and induces lipophagy which facilitates production of virus progeny particles. Interacts with serine protease NS3. In terms of assembly, homodimer. Interacts with host STAT2; this interaction inhibits the phosphorylation of the latter, and, when all viral proteins are present (polyprotein), targets STAT2 for degradation. Interacts with serine protease NS3. In terms of processing, specific enzymatic cleavages in vivo yield mature proteins. Cleavages in the lumen of endoplasmic reticulum are performed by host signal peptidase, whereas cleavages in the cytoplasmic side are performed by serine protease NS3. Signal cleavage at the 2K-4B site requires a prior NS3 protease-mediated cleavage at the 4A-2K site. Post-translationally, cleaved in post-Golgi vesicles by a host furin, releasing the mature small envelope protein M, and peptide pr. This cleavage is incomplete as up to 30% of viral particles still carry uncleaved prM. N-glycosylated. In terms of processing, N-glycosylated. The excreted form is glycosylated and this is required for efficient secretion of the protein from infected cells. Post-translationally, acetylated by host KAT5. Acetylation modulates NS3 RNA-binding and unwinding activities and plays an important positive role for viral replication. Sumoylation of RNA-directed RNA polymerase NS5 increases NS5 protein stability allowing proper viral RNA replication. In terms of processing, phosphorylated on serines residues. This phosphorylation may trigger NS5 nuclear localization.

It is found in the virion. The protein localises to the host nucleus. Its subcellular location is the host cytoplasm. The protein resides in the host perinuclear region. It localises to the secreted. It is found in the virion membrane. The protein localises to the host endoplasmic reticulum membrane. Its subcellular location is the host mitochondrion. The enzyme catalyses Selective hydrolysis of -Xaa-Xaa-|-Yaa- bonds in which each of the Xaa can be either Arg or Lys and Yaa can be either Ser or Ala.. It catalyses the reaction RNA(n) + a ribonucleoside 5'-triphosphate = RNA(n+1) + diphosphate. It carries out the reaction a ribonucleoside 5'-triphosphate + H2O = a ribonucleoside 5'-diphosphate + phosphate + H(+). The catalysed reaction is ATP + H2O = ADP + phosphate + H(+). The enzyme catalyses a 5'-end (5'-triphosphoguanosine)-ribonucleoside in mRNA + S-adenosyl-L-methionine = a 5'-end (N(7)-methyl 5'-triphosphoguanosine)-ribonucleoside in mRNA + S-adenosyl-L-homocysteine. It catalyses the reaction a 5'-end (N(7)-methyl 5'-triphosphoguanosine)-ribonucleoside in mRNA + S-adenosyl-L-methionine = a 5'-end (N(7)-methyl 5'-triphosphoguanosine)-(2'-O-methyl-ribonucleoside) in mRNA + S-adenosyl-L-homocysteine + H(+). In terms of biological role, plays a role in virus budding by binding to the cell membrane and gathering the viral RNA into a nucleocapsid that forms the core of a mature virus particle. During virus entry, may induce genome penetration into the host cytoplasm after hemifusion induced by the surface proteins. Can migrate to the cell nucleus where it modulates host functions. Overcomes the anti-viral effects of host EXOC1 by sequestering and degrading the latter through the proteasome degradation pathway. Functionally, inhibits RNA silencing by interfering with host Dicer. Its function is as follows. Prevents premature fusion activity of envelope proteins in trans-Golgi by binding to envelope protein E at pH6.0. After virion release in extracellular space, gets dissociated from E dimers. Acts as a chaperone for envelope protein E during intracellular virion assembly by masking and inactivating envelope protein E fusion peptide. prM is the only viral peptide matured by host furin in the trans-Golgi network probably to avoid catastrophic activation of the viral fusion activity in acidic Golgi compartment prior to virion release. prM-E cleavage is inefficient, and many virions are only partially matured. These uncleaved prM would play a role in immune evasion. In terms of biological role, may play a role in virus budding. Exerts cytotoxic effects by activating a mitochondrial apoptotic pathway through M ectodomain. May display a viroporin activity. Functionally, binds to host cell surface receptor and mediates fusion between viral and cellular membranes. Envelope protein is synthesized in the endoplasmic reticulum in the form of heterodimer with protein prM. They play a role in virion budding in the ER, and the newly formed immature particle is covered with 60 spikes composed of heterodimer between precursor prM and envelope protein E. The virion is transported to the Golgi apparatus where the low pH causes dissociation of PrM-E heterodimers and formation of E homodimers. prM-E cleavage is inefficient, and many virions are only partially matured. These uncleaved prM would play a role in immune evasion. Its function is as follows. Involved in immune evasion, pathogenesis and viral replication. Once cleaved off the polyprotein, is targeted to three destinations: the viral replication cycle, the plasma membrane and the extracellular compartment. Essential for viral replication. Required for formation of the replication complex and recruitment of other non-structural proteins to the ER-derived membrane structures. Excreted as a hexameric lipoparticle that plays a role against host immune response. Antagonizing the complement function. Binds to the host macrophages and dendritic cells. Inhibits signal transduction originating from Toll-like receptor 3 (TLR3). Disrupts the host endothelial glycocalyx layer of host pulmonary microvascular endothelial cells, inducing degradation of sialic acid and shedding of heparan sulfate proteoglycans. NS1 induces expression of sialidases, heparanase, and activates cathepsin L, which activates heparanase via enzymatic cleavage. These effects are probably linked to the endothelial hyperpermeability observed in severe dengue disease. In terms of biological role, component of the viral RNA replication complex that functions in virion assembly and antagonizes the host immune response. Functionally, required cofactor for the serine protease function of NS3. May have membrane-destabilizing activity and form viroporins. Its function is as follows. Displays three enzymatic activities: serine protease, NTPase and RNA helicase. NS3 serine protease, in association with NS2B, performs its autocleavage and cleaves the polyprotein at dibasic sites in the cytoplasm: C-prM, NS2A-NS2B, NS2B-NS3, NS3-NS4A, NS4A-2K and NS4B-NS5. NS3 RNA helicase binds RNA and unwinds dsRNA in the 3' to 5' direction. Regulates the ATPase activity of the NS3 helicase activity. NS4A allows NS3 helicase to conserve energy during unwinding. Plays a role in the inhibition of the host innate immune response. Interacts with host MAVS and thereby prevents the interaction between RIGI and MAVS. In turn, IFN-beta production is impaired. Interacts with host AUP1 which mediates induction of lipophagy in host cells and facilitates production of virus progeny particles. In terms of biological role, functions as a signal peptide for NS4B and is required for the interferon antagonism activity of the latter. Functionally, induces the formation of ER-derived membrane vesicles where the viral replication takes place. Inhibits interferon (IFN)-induced host STAT1 phosphorylation and nuclear translocation, thereby preventing the establishment of cellular antiviral state by blocking the IFN-alpha/beta pathway. Its function is as follows. Replicates the viral (+) and (-) RNA genome, and performs the capping of genomes in the cytoplasm. NS5 methylates viral RNA cap at guanine N-7 and ribose 2'-O positions. Besides its role in RNA genome replication, also prevents the establishment of cellular antiviral state by blocking the interferon-alpha/beta (IFN-alpha/beta) signaling pathway. Inhibits host TYK2 and STAT2 phosphorylation, thereby preventing activation of JAK-STAT signaling pathway. In Dengue virus type 3 (strain Philippines/H87/1956) (DENV-3), this protein is Genome polyprotein.